Here is a 437-residue protein sequence, read N- to C-terminus: Trigger factor (437 aa).

The 86-residue stretch at 161–246 folds into the PPIase FKBP-type domain; the sequence is GDQVNINFVG…VNSVSEAVLP (86 aa).

This sequence belongs to the FKBP-type PPIase family. Tig subfamily.

The protein resides in the cytoplasm. It carries out the reaction [protein]-peptidylproline (omega=180) = [protein]-peptidylproline (omega=0). Its function is as follows. Involved in protein export. Acts as a chaperone by maintaining the newly synthesized protein in an open conformation. Functions as a peptidyl-prolyl cis-trans isomerase. This is Trigger factor from Cellvibrio japonicus (strain Ueda107) (Pseudomonas fluorescens subsp. cellulosa).